Consider the following 100-residue polypeptide: Integration host factor subunit alpha (100 aa).

Belongs to the bacterial histone-like protein family. Heterodimer of an alpha and a beta chain.

Functionally, this protein is one of the two subunits of integration host factor, a specific DNA-binding protein that functions in genetic recombination as well as in transcriptional and translational control. This chain is Integration host factor subunit alpha, found in Caulobacter vibrioides (strain ATCC 19089 / CIP 103742 / CB 15) (Caulobacter crescentus).